The sequence spans 564 residues: Zyxin (564 aa).

Residue alanine 2 is modified to N-acetylalanine. Positions valine 30–lysine 141 are disordered. Pro residues-rich tracts occupy residues isoleucine 63–leucine 78 and phenylalanine 93–proline 109. A phosphoserine mark is found at serine 117, serine 144, serine 170, and serine 171. The disordered stretch occupies residues asparagine 162 to threonine 344. Composition is skewed to pro residues over residues valine 174–lysine 189 and proline 197–glutamine 214. Threonine 180 carries the phosphothreonine modification. Polar residues predominate over residues glutamine 234–proline 243. Residue arginine 244 is modified to Asymmetric dimethylarginine. A compositionally biased stretch (low complexity) spans proline 255–alanine 275. Lysine 256 and lysine 263 each carry N6-acetyllysine. Threonine 265 carries the phosphothreonine modification. Lysine 270 bears the N6-acetyllysine mark. Residues serine 272 and serine 300 each carry the phosphoserine modification. Over residues serine 294 to glutamine 310 the composition is skewed to polar residues. Residues glutamine 311–histidine 322 show a composition bias toward basic and acidic residues. Serine 336 is subject to Phosphoserine. 3 LIM zinc-binding domains span residues cysteine 376–lysine 435, cysteine 436–arginine 495, and cysteine 496–alanine 562.

This sequence belongs to the zyxin/ajuba family. In terms of assembly, interacts, via the Pro-rich regions, with the EVH1 domains of ENAH, EVL and VASP. Interacts with the first LIM domain of TES. Interacts with SYNPO2.

The protein localises to the cytoplasm. It localises to the cytoskeleton. Its subcellular location is the cell junction. The protein resides in the focal adhesion. It is found in the nucleus. Functionally, adhesion plaque protein. Binds alpha-actinin and the CRP protein. Important for targeting TES and ENA/VASP family members to focal adhesions and for the formation of actin-rich structures. May be a component of a signal transduction pathway that mediates adhesion-stimulated changes in gene expression. This is Zyxin (Zyx) from Mus musculus (Mouse).